The sequence spans 1008 residues: PWWP domain-containing protein 3 (1008 aa).

A coiled-coil region spans residues 78–122 (VSSLLKLKEDVEEEEEEEEEEEEEEEDGEDEEEEEEEEEEEEEEE). Positions 84–124 (LKEDVEEEEEEEEEEEEEEEDGEDEEEEEEEEEEEEEEEHG) are disordered. A compositionally biased stretch (acidic residues) spans 87–122 (DVEEEEEEEEEEEEEEEDGEDEEEEEEEEEEEEEEE). Residues 127-188 (VGDFVWGKIK…ASQLKPFAES (62 aa)) form the PWWP domain. Disordered stretches follow at residues 307-339 (EYHE…GLQW), 399-606 (ETEP…LGQE), and 668-874 (NHKF…GPGS). Over residues 321–330 (NNDDDDDDEE) the composition is skewed to acidic residues. Basic and acidic residues predominate over residues 399 to 409 (ETEPADGDVKS). A compositionally biased stretch (acidic residues) spans 473-490 (DDGDDDGSGDKEESEEKE). Composition is skewed to basic and acidic residues over residues 511 to 522 (RFDDSVVERSTE), 677 to 687 (SSDKEKEELSE), and 707 to 725 (QKAE…TDKH). The segment covering 726 to 738 (GKMKKERKRKKSE) has biased composition (basic residues). Composition is skewed to basic and acidic residues over residues 739 to 758 (SKKE…ESTK), 768 to 787 (SKKQ…ESTK), and 794 to 818 (NPES…ESTK). 3 consecutive short sequence motifs (nuclear localization signal) follow at residues 786–793 (TKKERKRK), 809–816 (TRKESVES), and 841–848 (EKKKKKKR). Residues 804–824 (VEEEETRKESVESTKKERKRK) adopt a coiled-coil conformation. Over residues 842-854 (KKKKKKREGKSKK) the composition is skewed to basic residues.

It belongs to the PDP family. In terms of assembly, interacts with DEK3. Binds to LHP1, MSI4/FVE and MSI5. Component of the PRC2 (polycomb repressive complex 2) complex which regulates histone methylation on histone H3K27.

The protein resides in the nucleus. Functionally, together with PDP1, PDP2 and PDP6, interacts with MSI4/FVE and MSI5 to suppress FLC, MAF4 and MAF5 expression by regulating the function of the PRC2 complex and modulating H3K27me3 level, thereby promoting flowering. The protein is PWWP domain-containing protein 3 of Arabidopsis thaliana (Mouse-ear cress).